Reading from the N-terminus, the 37-residue chain is Large ribosomal subunit protein bL36 (37 aa).

This sequence belongs to the bacterial ribosomal protein bL36 family.

The protein is Large ribosomal subunit protein bL36 of Alkaliphilus metalliredigens (strain QYMF).